The chain runs to 317 residues: Ataxin-3 homolog (317 aa).

Residues 7 to 178 (INSIFFEHQE…RSDADDLISL (172 aa)) form the Josephin domain. Residue Cys20 is the Nucleophile of the active site. The active-site Proton acceptor is His117. Asn132 is a catalytic residue. UIM domains lie at 219–239 (SQEE…KDGS) and 247–264 (EIDE…QAPG). Residues 254 to 317 (RKAIELSQAP…KKKEERNDEK (64 aa)) are disordered. Over residues 276-293 (RSRSSTPPGASEPFSNAE) the composition is skewed to polar residues. A compositionally biased stretch (basic and acidic residues) spans 294–317 (QQRRDRQKFLERFEKKKEERNDEK). Positions 296–299 (RRDR) are interaction with cdc-48.1 and cdc-48.2.

In terms of assembly, forms a complex composed of deubiquitinating enzyme atx-3, adapter ubxn-5 and cdc-48.1. Forms a complex composed of deubiquitinating enzyme atx-3, E4 ubiquitin-protein ligase ufd-2 and cdc-48.1. Interacts (via RRDR motif) with cdc-48.1 (via N-terminus) and cdc-48.2 (via N-terminus); the interaction with cdc-48.1 is not required for atx-3 enzymatic activity. Interacts (via C-terminus) with ubxn-5. May interact with ned-8. As to expression, expressed in germline (at protein level). Expressed in spermatheca, pharynx, dorsal and ventral cords, some head neurons, hypodermis, body wall muscles and coelomocytes.

Its subcellular location is the cytoplasm. It localises to the nucleus. The protein resides in the nucleolus. It catalyses the reaction Thiol-dependent hydrolysis of ester, thioester, amide, peptide and isopeptide bonds formed by the C-terminal Gly of ubiquitin (a 76-residue protein attached to proteins as an intracellular targeting signal).. Its function is as follows. Acts as a chain editing deubiquitinating enzyme that binds and cleaves 'Lys-48'-linked polyubiquitin chains, with a preference for chains containing four or more ubiquitin molecules thereby modulating protein degradation by the ubiquitin-proteasome pathway. Probably by regulating the IGF-1-insulin-like pathway, regulates lifespan. Regulates germline DNA double-strand-break repair and apoptosis in response to DNA damage by recruiting E4 ubiquitin-protein ligase ufd-2 to DNA repair foci. Interacts with key regulators of transcription and represses transcription. Acts as a histone-binding protein that regulates transcription. The protein is Ataxin-3 homolog (atx-3) of Caenorhabditis elegans.